We begin with the raw amino-acid sequence, 415 residues long: Multidrug resistance protein MdtA (415 aa).

A signal peptide spans 1 to 21 (MKGSYKSRWVIVIVVVIAAIA). Disordered stretches follow at residues 32-60 (SRSAAPGATKQAQQSPAGGRRGMRSGPLA) and 392-415 (EAQSATTPEEKATSREYAKKGARS). The span at 399-415 (PEEKATSREYAKKGARS) shows a compositional bias: basic and acidic residues.

It belongs to the membrane fusion protein (MFP) (TC 8.A.1) family. As to quaternary structure, part of a tripartite efflux system composed of MdtA, MdtB and MdtC.

The protein localises to the cell inner membrane. In terms of biological role, the MdtABC tripartite complex confers resistance against novobiocin and deoxycholate. In Escherichia coli (strain K12 / MC4100 / BW2952), this protein is Multidrug resistance protein MdtA.